We begin with the raw amino-acid sequence, 336 residues long: DNA-directed RNA polymerase subunit alpha (336 aa).

The tract at residues 1 to 235 (MIEFVIPKKL…HFKIVTEGLP (235 aa)) is alpha N-terminal domain (alpha-NTD). The segment at 264-336 (RENSDVYNRK…KFGLELRKGE (73 aa)) is alpha C-terminal domain (alpha-CTD).

The protein belongs to the RNA polymerase alpha chain family. Homodimer. The RNAP catalytic core consists of 2 alpha, 1 beta, 1 beta' and 1 omega subunit. When a sigma factor is associated with the core the holoenzyme is formed, which can initiate transcription.

It carries out the reaction RNA(n) + a ribonucleoside 5'-triphosphate = RNA(n+1) + diphosphate. DNA-dependent RNA polymerase catalyzes the transcription of DNA into RNA using the four ribonucleoside triphosphates as substrates. In Thermotoga maritima (strain ATCC 43589 / DSM 3109 / JCM 10099 / NBRC 100826 / MSB8), this protein is DNA-directed RNA polymerase subunit alpha.